Consider the following 339-residue polypeptide: Dual specificity protein phosphatase 12 (339 aa).

The residue at position 1 (Met1) is an N-acetylmethionine. The span at 1 to 22 shows a compositional bias: polar residues; sequence MLEVQSSNHGCERQAPTTSPAS. Positions 1-25 are disordered; it reads MLEVQSSNHGCERQAPTTSPASSAG. The region spanning 26–170 is the Tyrosine-protein phosphatase domain; sequence HAVEVRPGLY…LKLYEAMGHE (145 aa). Cys114 acts as the Phosphocysteine intermediate in catalysis. 115-120 contributes to the substrate binding site; that stretch reads HAGVSR. A Phosphoserine modification is found at Ser334.

It belongs to the protein-tyrosine phosphatase family. Non-receptor class dual specificity subfamily. In terms of assembly, monomer. Requires Zn(2+) as cofactor.

It is found in the nucleus. Its subcellular location is the cytoplasm. The protein resides in the cytosol. The catalysed reaction is O-phospho-L-tyrosyl-[protein] + H2O = L-tyrosyl-[protein] + phosphate. The enzyme catalyses O-phospho-L-seryl-[protein] + H2O = L-seryl-[protein] + phosphate. It catalyses the reaction O-phospho-L-threonyl-[protein] + H2O = L-threonyl-[protein] + phosphate. Functionally, dual specificity phosphatase; can dephosphorylate both phosphotyrosine and phosphoserine or phosphothreonine residues. Can dephosphorylate glucokinase (in vitro). Has phosphatase activity with the synthetic substrate 6,8-difluoro-4-methylumbelliferyl phosphate and other in vitro substrates. This is Dual specificity protein phosphatase 12 (Dusp12) from Rattus norvegicus (Rat).